Here is a 404-residue protein sequence, read N- to C-terminus: uncharacterized protein (404 aa).

Residues 1 to 22 (MASSINNSSQPTVPSISNNSHG) are compositionally biased toward polar residues. Residues 1–110 (MASSINNSSQ…QQTPVKRRRR (110 aa)) are disordered. A Phosphothreonine modification is found at T47. A compositionally biased stretch (polar residues) spans 87-104 (SRGSSLKSHLETESQQTP). Residues 117 to 166 (VDYCSACGGRGLFICCEGCPCSFHLSCLEPPLTPENIPEGSWFCVTCSIK) form a PHD-type zinc finger.

This is an uncharacterized protein from Schizosaccharomyces pombe (strain 972 / ATCC 24843) (Fission yeast).